Reading from the N-terminus, the 527-residue chain is Nucleus accumbens-associated protein 1 (527 aa).

Residues 30 to 94 (CDVSVVVKGH…CYTGRLSMNV (65 aa)) enclose the BTB domain. The segment at 131-153 (QGLHAEEAPSSEPQSPVAQTSGW) is disordered. The segment covering 141–152 (SEPQSPVAQTSG) has biased composition (polar residues). Residue K167 forms a Glycyl lysine isopeptide (Lys-Gly) (interchain with G-Cter in SUMO1); alternate linkage. K167 is covalently cross-linked (Glycyl lysine isopeptide (Lys-Gly) (interchain with G-Cter in SUMO2); alternate). K183 is covalently cross-linked (Glycyl lysine isopeptide (Lys-Gly) (interchain with G-Cter in SUMO2)). S188 is subject to Phosphoserine. The segment at 210–292 (DLAANRPHQP…DEEEDGGEEG (83 aa)) is disordered. Low complexity predominate over residues 225–251 (APVVAAAQPAVAAGAGQPAGGVAAAGG). Positions 255–277 (GPSTSERTSPGTSSAYTSDSPGS) are enriched in polar residues. S259 bears the Phosphoserine; by PKC mark. Residues 281 to 292 (EEDEEEDGGEEG) show a composition bias toward acidic residues. Glycyl lysine isopeptide (Lys-Gly) (interchain with G-Cter in SUMO2) cross-links involve residues K318, K452, K480, K483, and K498. In terms of domain architecture, BEN spans 374–471 (GTNVYITRAQ…DMCTNARRVV (98 aa)).

Homooligomer; mediated by the BTB domain. Interacts with HDAC3 and HDAC4. Interacts (via BTB domain) with CUL3, PSMD7 and RCOR1. In terms of tissue distribution, overexpressed in several types of carcinomas including ovarian serous carcinomas. Expression levels positively correlate with tumor recurrence in ovarian serous carcinomas, and intense immunoreactivity in primary ovarian tumors predicts early recurrence. Up-regulated in ovarian carcinomas after chemotherapy, suggesting a role in development of chemotherapy resistance in ovarian cancer.

It is found in the nucleus. The protein localises to the cytoplasm. Functions as a transcriptional repressor. Seems to function as a transcriptional corepressor in neuronal cells through recruitment of HDAC3 and HDAC4. Contributes to tumor progression, and tumor cell proliferation and survival. This may be mediated at least in part through repressing transcriptional activity of GADD45GIP1. Required for recruiting the proteasome from the nucleus to the cytoplasm and dendritic spines. The protein is Nucleus accumbens-associated protein 1 (NACC1) of Homo sapiens (Human).